The primary structure comprises 165 residues: Nascent polypeptide-associated complex subunit beta (165 aa).

Disordered stretches follow at residues 1-34 (MDQA…TSGA) and 133-165 (QNMQ…KSVD). Residues 20-30 (TPRRKVKKVHK) are compositionally biased toward basic residues. Positions 33–110 (GADDKKLQAT…GEEKELTELV (78 aa)) constitute an NAC-A/B domain. Positions 145–158 (DDDEDDIPDLVEGE) are enriched in acidic residues.

Belongs to the NAC-beta family. Part of the nascent polypeptide-associated complex (NAC), consisting of egd2 and egd1. NAC associates with ribosomes via egd1.

The protein resides in the cytoplasm. It is found in the nucleus. Its function is as follows. Component of the nascent polypeptide-associated complex (NAC), a dynamic component of the ribosomal exit tunnel, protecting the emerging polypeptides from interaction with other cytoplasmic proteins to ensure appropriate nascent protein targeting. The NAC complex also promotes mitochondrial protein import by enhancing productive ribosome interactions with the outer mitochondrial membrane and blocks the inappropriate interaction of ribosomes translating non-secretory nascent polypeptides with translocation sites in the membrane of the endoplasmic reticulum. EGD1 may act as a transcription factor that exert a negative effect on the expression of several genes that are transcribed by RNA polymerase II. In Emericella nidulans (strain FGSC A4 / ATCC 38163 / CBS 112.46 / NRRL 194 / M139) (Aspergillus nidulans), this protein is Nascent polypeptide-associated complex subunit beta (egd1).